The sequence spans 1382 residues: DNA-directed RNA polymerase subunit beta' (1382 aa).

Residues cysteine 70, cysteine 72, cysteine 85, and cysteine 88 each coordinate Zn(2+). Mg(2+) contacts are provided by aspartate 460, aspartate 462, and aspartate 464. Residues cysteine 808, cysteine 882, cysteine 889, and cysteine 892 each contribute to the Zn(2+) site.

It belongs to the RNA polymerase beta' chain family. The RNAP catalytic core consists of 2 alpha, 1 beta, 1 beta' and 1 omega subunit. When a sigma factor is associated with the core the holoenzyme is formed, which can initiate transcription. The cofactor is Mg(2+). Requires Zn(2+) as cofactor.

It catalyses the reaction RNA(n) + a ribonucleoside 5'-triphosphate = RNA(n+1) + diphosphate. In terms of biological role, DNA-dependent RNA polymerase catalyzes the transcription of DNA into RNA using the four ribonucleoside triphosphates as substrates. The chain is DNA-directed RNA polymerase subunit beta' from Geobacter sp. (strain M21).